The following is a 426-amino-acid chain: MTEFIGSRISLISKSDIRYVGILQDINSQDSTLALKHVRWCGTEGRKQDPSQEIPPSDNVFDYIVFRGSDVKDLRIEEPATTPSAPPVQPPNDPAIIGSNSGQYNWNQAQTAQPPQPVQPNPYGAPYQQAPPAGAPYYMYPNAPAQFVPPGGLPLGTPLDASTPAVPYYGAPDQQQMGQRPEFAQNVSQGFAGQAPYNVRPGYGMPSNQKPPNFAPGMPAPGPTAVSASPSLQSMPPTNGVIPGAQPSIEASIEKESTSIRNSTVTNDRVVNTTVDVSQSQTVETSGPSKEVPTTQPDASAAKPRTEFDFQTANQKFQSMKDDLLKGKNDEEAEEFYKPKQSFFDNISCESKEKGMEAADRRALRDRERSLNMETFGVAGSGNRGRRGRGRGRGGRGRGRGYARNQYNQYRNSNGSQPRAQPANDQ.

The Sm domain occupies 1 to 80 (MTEFIGSRIS…VKDLRIEEPA (80 aa)). 3 disordered regions span residues 79–100 (PATT…IGSN), 204–305 (GMPS…AKPR), and 348–426 (SCES…ANDQ). The segment covering 84–93 (SAPPVQPPND) has biased composition (pro residues). Residues 226–237 (VSASPSLQSMPP) are compositionally biased toward polar residues. Residues 261–278 (RNSTVTNDRVVNTTVDVS) are compositionally biased toward low complexity. Residues 279–298 (QSQTVETSGPSKEVPTTQPD) show a composition bias toward polar residues. Residues 296–332 (QPDASAAKPRTEFDFQTANQKFQSMKDDLLKGKNDEE) enclose the DFDF domain. The FFD box motif lies at 335 to 351 (EFYKPKQSFFDNISCES). The segment covering 350–371 (ESKEKGMEAADRRALRDRERSL) has biased composition (basic and acidic residues). The TFG box signature appears at 360-380 (DRRALRDRERSLNMETFGVAG). Residues 384-401 (RGRRGRGRGRGGRGRGRG) are compositionally biased toward basic residues. The segment covering 405–426 (NQYNQYRNSNGSQPRAQPANDQ) has biased composition (polar residues).

Required for G2/M phase checkpoint control. The chain is Protein sum2 (sum2) from Schizosaccharomyces pombe (strain 972 / ATCC 24843) (Fission yeast).